The sequence spans 82 residues: UPF0180 protein BALH_1248 (82 aa).

The protein belongs to the UPF0180 family.

This chain is UPF0180 protein BALH_1248, found in Bacillus thuringiensis (strain Al Hakam).